We begin with the raw amino-acid sequence, 149 residues long: Deoxyuridine 5'-triphosphate nucleotidohydrolase (149 aa).

Substrate-binding positions include R68–G70, N81, and L85–D87.

The protein belongs to the dUTPase family. Mg(2+) is required as a cofactor.

The enzyme catalyses dUTP + H2O = dUMP + diphosphate + H(+). Its pathway is pyrimidine metabolism; dUMP biosynthesis; dUMP from dCTP (dUTP route): step 2/2. This enzyme is involved in nucleotide metabolism: it produces dUMP, the immediate precursor of thymidine nucleotides and it decreases the intracellular concentration of dUTP so that uracil cannot be incorporated into DNA. The sequence is that of Deoxyuridine 5'-triphosphate nucleotidohydrolase from Azoarcus sp. (strain BH72).